The sequence spans 637 residues: Zinc-transporting ATPase (637 aa).

Transmembrane regions (helical) follow at residues 43 to 63 (GWLLSGYQVLSIILFLLAFVI), 89 to 109 (IFAAIGSALIGYWAEGAILIF), 258 to 278 (GVLIAVALLLFVPHFALGWSW), and 286 to 306 (MVFMVVASPCALVASIMPAAL). Catalysis depends on aspartate 337, which acts as the 4-aspartylphosphate intermediate. Residues aspartate 535 and aspartate 539 each coordinate Mg(2+). The chain crosses the membrane as a helical span at residues 599–619 (VICLLICANFLQAMELPFGVI).

This sequence belongs to the cation transport ATPase (P-type) (TC 3.A.3) family. Type IB subfamily.

Its subcellular location is the cell membrane. The catalysed reaction is Zn(2+)(out) + ATP(in) + H2O(in) = Zn(2+)(in) + ADP(in) + phosphate(in) + H(+)(in). Its function is as follows. Couples the hydrolysis of ATP with the transport of zinc into the cell. Plays an important role in protecting cells against oxidative stress. ZosA-mediated zinc transport is required for post-transcriptional control of comK and competence development. The chain is Zinc-transporting ATPase (zosA) from Bacillus subtilis (strain 168).